A 211-amino-acid polypeptide reads, in one-letter code: MNNRFIVVEGLDGSGKTTIVHKIVKYFYNQKITNVITTHEPGGTEIAYILSELIKNKSKNEKLTDLSELLMLYAARSQLLENVIKPALFKGDWVIGDRCDLSSFAYQGAGRKLNSVLLNMLSQYVINDFFPKLIFYLDIPSELVLSRIKNRKVLDRIEQESLSFFNRVRSYYRKLAFLKENIIMIDASQPLEQVCVFIYRYLDQWLCDLYK.

10–17 contributes to the ATP binding site; it reads GLDGSGKT.

It belongs to the thymidylate kinase family.

The catalysed reaction is dTMP + ATP = dTDP + ADP. Its function is as follows. Phosphorylation of dTMP to form dTDP in both de novo and salvage pathways of dTTP synthesis. The protein is Thymidylate kinase of Blochmanniella floridana.